A 573-amino-acid chain; its full sequence is Methionine--tRNA ligase (573 aa).

The short motif at 10–20 (PYVNSVPHLGN) is the 'HIGH' region element. The Zn(2+) site is built by Cys-143, Cys-146, Cys-156, and Cys-159. The 'KMSKS' region signature appears at 333–337 (KFSKS). Lys-336 is an ATP binding site.

It belongs to the class-I aminoacyl-tRNA synthetase family. MetG type 1 subfamily. The cofactor is Zn(2+).

It localises to the cytoplasm. The enzyme catalyses tRNA(Met) + L-methionine + ATP = L-methionyl-tRNA(Met) + AMP + diphosphate. In terms of biological role, is required not only for elongation of protein synthesis but also for the initiation of all mRNA translation through initiator tRNA(fMet) aminoacylation. This is Methionine--tRNA ligase from Saccharolobus islandicus (strain M.14.25 / Kamchatka #1) (Sulfolobus islandicus).